The primary structure comprises 152 residues: Xanthine-guanine phosphoribosyltransferase (152 aa).

5-phospho-alpha-D-ribose 1-diphosphate contacts are provided by residues 37 to 38, R69, and 88 to 96; these read RG and DDLVDTGGT. Residue R69 participates in GMP binding. D89 is a Mg(2+) binding site. Residues D92 and I135 each contribute to the guanine site. The xanthine site is built by D92 and I135. Residues 92–96 and 134–135 each bind GMP; these read DTGGT and WI.

The protein belongs to the purine/pyrimidine phosphoribosyltransferase family. XGPT subfamily. Homotetramer. Requires Mg(2+) as cofactor.

Its subcellular location is the cell inner membrane. The catalysed reaction is GMP + diphosphate = guanine + 5-phospho-alpha-D-ribose 1-diphosphate. It carries out the reaction XMP + diphosphate = xanthine + 5-phospho-alpha-D-ribose 1-diphosphate. It catalyses the reaction IMP + diphosphate = hypoxanthine + 5-phospho-alpha-D-ribose 1-diphosphate. It participates in purine metabolism; GMP biosynthesis via salvage pathway; GMP from guanine: step 1/1. Its pathway is purine metabolism; XMP biosynthesis via salvage pathway; XMP from xanthine: step 1/1. Its function is as follows. Purine salvage pathway enzyme that catalyzes the transfer of the ribosyl-5-phosphate group from 5-phospho-alpha-D-ribose 1-diphosphate (PRPP) to the N9 position of the 6-oxopurines guanine and xanthine to form the corresponding ribonucleotides GMP (guanosine 5'-monophosphate) and XMP (xanthosine 5'-monophosphate), with the release of PPi. To a lesser extent, also acts on hypoxanthine. This chain is Xanthine-guanine phosphoribosyltransferase, found in Yersinia pseudotuberculosis serotype O:1b (strain IP 31758).